Here is a 317-residue protein sequence, read N- to C-terminus: MNDNDSPRALFVFAHPDDETILSGGTMARLAAEGAHVSLLTCTLGEEGEVIAPELRELAADRADQLGGWRIAELRSALDRLGSPRGARISQHWLAGPGRWRDSGMAAGRNTHPRAFIGGDFGEQARAAAKTIREVRPHVVVTHDPEGGYGHRDHIYANRLVVEAVKIAAAETHSEFGAPWQVKKLYWTGIGESAWRRAIKELGRRAIPDGFELVHADVAKPRRDEEITTVVDIGDYRAAKLAALAAHATQITVCHELAAFALSNKALTPVPAEEHFLLVPLRFGAVDNQDLDNRNPNSQPPADQAREDHLLTGLGFA.

3 residues coordinate Zn(2+): His-15, Asp-18, and His-154. The disordered stretch occupies residues 289–317 (QDLDNRNPNSQPPADQAREDHLLTGLGFA).

Belongs to the MshB deacetylase family. Zn(2+) serves as cofactor.

It carries out the reaction 1D-myo-inositol 2-acetamido-2-deoxy-alpha-D-glucopyranoside + H2O = 1D-myo-inositol 2-amino-2-deoxy-alpha-D-glucopyranoside + acetate. In terms of biological role, catalyzes the deacetylation of 1D-myo-inositol 2-acetamido-2-deoxy-alpha-D-glucopyranoside (GlcNAc-Ins) in the mycothiol biosynthesis pathway. The protein is 1D-myo-inositol 2-acetamido-2-deoxy-alpha-D-glucopyranoside deacetylase of Segniliparus rotundus (strain ATCC BAA-972 / CDC 1076 / CIP 108378 / DSM 44985 / JCM 13578).